Reading from the N-terminus, the 386-residue chain is GTPase Obg (386 aa).

Residues 1-159 (MKFIDEARIE…RTLKLELKVL (159 aa)) form the Obg domain. Residues 160–348 (ADVGLLGMPN…LTFAIMSYLD (189 aa)) enclose the OBG-type G domain. Residues 166-173 (GMPNAGKS), 191-195 (FTTLH), 213-216 (DIPG), 284-287 (NKVD), and 329-331 (SAL) each bind GTP. Mg(2+) contacts are provided by Ser173 and Thr193.

It belongs to the TRAFAC class OBG-HflX-like GTPase superfamily. OBG GTPase family. As to quaternary structure, monomer. Mg(2+) is required as a cofactor.

The protein resides in the cytoplasm. Functionally, an essential GTPase which binds GTP, GDP and possibly (p)ppGpp with moderate affinity, with high nucleotide exchange rates and a fairly low GTP hydrolysis rate. Plays a role in control of the cell cycle, stress response, ribosome biogenesis and in those bacteria that undergo differentiation, in morphogenesis control. This is GTPase Obg from Chromobacterium violaceum (strain ATCC 12472 / DSM 30191 / JCM 1249 / CCUG 213 / NBRC 12614 / NCIMB 9131 / NCTC 9757 / MK).